A 237-amino-acid chain; its full sequence is MSDVTTAEFNEEGKYLRKVRSFVLREGRLTKGQAQAMEQQWPIMGLDYTPESIDLVEVFGREADTVLEIGFGMGASLVAMAKASPELNFIGIEVHKPGVGACLAEAAEAGVTNLRVYHHDAIEVLENSIAEGSLACVQLFFPDPWHKTRHHKRRIVQAPFAELIRSKLKVGGVFHLATDWENYSEHMLEVMNAAPGYKNQSATGDVVERPDHRPLTKFEARGHRLGHGVWDLMFERV.

Positions 68, 93, 120, and 143 each coordinate S-adenosyl-L-methionine. Residue Asp-143 is part of the active site. Substrate-binding positions include Lys-147, Asp-179, and 216-219 (TKFE).

This sequence belongs to the class I-like SAM-binding methyltransferase superfamily. TrmB family.

The enzyme catalyses guanosine(46) in tRNA + S-adenosyl-L-methionine = N(7)-methylguanosine(46) in tRNA + S-adenosyl-L-homocysteine. Its pathway is tRNA modification; N(7)-methylguanine-tRNA biosynthesis. Catalyzes the formation of N(7)-methylguanine at position 46 (m7G46) in tRNA. The chain is tRNA (guanine-N(7)-)-methyltransferase from Shewanella halifaxensis (strain HAW-EB4).